Here is a 306-residue protein sequence, read N- to C-terminus: Acetyl-coenzyme A carboxylase carboxyl transferase subunit beta (306 aa).

The CoA carboxyltransferase N-terminal domain occupies 27 to 296 (LWHKCPSCDA…PRFVAPVIEP (270 aa)). The Zn(2+) site is built by C31, C34, C50, and C53. A C4-type zinc finger spans residues 31–53 (CPSCDAVLYRPELEKTLDVCPKC).

The protein belongs to the AccD/PCCB family. As to quaternary structure, acetyl-CoA carboxylase is a heterohexamer composed of biotin carboxyl carrier protein (AccB), biotin carboxylase (AccC) and two subunits each of ACCase subunit alpha (AccA) and ACCase subunit beta (AccD). The cofactor is Zn(2+).

The protein localises to the cytoplasm. It carries out the reaction N(6)-carboxybiotinyl-L-lysyl-[protein] + acetyl-CoA = N(6)-biotinyl-L-lysyl-[protein] + malonyl-CoA. The protein operates within lipid metabolism; malonyl-CoA biosynthesis; malonyl-CoA from acetyl-CoA: step 1/1. Its function is as follows. Component of the acetyl coenzyme A carboxylase (ACC) complex. Biotin carboxylase (BC) catalyzes the carboxylation of biotin on its carrier protein (BCCP) and then the CO(2) group is transferred by the transcarboxylase to acetyl-CoA to form malonyl-CoA. The sequence is that of Acetyl-coenzyme A carboxylase carboxyl transferase subunit beta from Pseudomonas syringae pv. tomato (strain ATCC BAA-871 / DC3000).